The primary structure comprises 241 residues: tRNA (guanine-N(7)-)-methyltransferase B (241 aa).

The S-adenosyl-L-methionine site is built by glycine 61, glutamate 84, arginine 86, asparagine 117, alanine 118, and leucine 137. Aspartate 140 is a catalytic residue. Residues 141–149 form an alphaC helix region; it reads PHFKKTKHK. S-adenosyl-L-methionine-binding residues include threonine 215 and glutamate 217. An alpha6 helix region spans residues 215–223; that stretch reads TEEGKKVQR.

This sequence belongs to the class I-like SAM-binding methyltransferase superfamily. TrmB family. In terms of assembly, catalytic component of the METTL1-WDR4 complex, composed of mettl1 and wdr4.

It localises to the nucleus. It catalyses the reaction guanosine(46) in tRNA + S-adenosyl-L-methionine = N(7)-methylguanosine(46) in tRNA + S-adenosyl-L-homocysteine. The enzyme catalyses a guanosine in mRNA + S-adenosyl-L-methionine = an N(7)-methylguanosine in mRNA + S-adenosyl-L-homocysteine. It carries out the reaction a guanosine in miRNA + S-adenosyl-L-methionine = an N(7)-methylguanosine in miRNA + S-adenosyl-L-homocysteine. It functions in the pathway tRNA modification; N(7)-methylguanine-tRNA biosynthesis. In terms of biological role, catalytic component of METTL1-WDR4 methyltransferase complex that mediates the formation of N(7)-methylguanine in a subset of RNA species, such as tRNAs, mRNAs and microRNAs (miRNAs). Catalyzes the formation of N(7)-methylguanine at position 46 (m7G46) in a large subset of tRNAs that contain the 5'-RAGGU-3' motif within the variable loop. M7G46 interacts with C13-G22 in the D-loop to stabilize tRNA tertiary structure and protect tRNAs from decay. Also acts as a methyltransferase for a subset of internal N(7)-methylguanine in mRNAs. Internal N(7)-methylguanine methylation of mRNAs in response to stress promotes their relocalization to stress granules, thereby suppressing their translation. Also methylates a specific subset of miRNAs. In Xenopus tropicalis (Western clawed frog), this protein is tRNA (guanine-N(7)-)-methyltransferase B (mettl1-B).